The chain runs to 908 residues: DNA mismatch repair protein MutS (908 aa).

An ATP-binding site is contributed by 659–666 (GPNMAGKS).

The protein belongs to the DNA mismatch repair MutS family.

Its function is as follows. This protein is involved in the repair of mismatches in DNA. It is possible that it carries out the mismatch recognition step. This protein has a weak ATPase activity. This is DNA mismatch repair protein MutS from Parvibaculum lavamentivorans (strain DS-1 / DSM 13023 / NCIMB 13966).